A 193-amino-acid polypeptide reads, in one-letter code: Putative F-box protein At1g31072 (193 aa).

Positions 4 to 53 (EKTLDSIPIDVFLDIFSRLPAKSVGRSCCVSNRWASILGSQDFKELFLTM) constitute an F-box domain.

The chain is Putative F-box protein At1g31072 from Arabidopsis thaliana (Mouse-ear cress).